The following is a 378-amino-acid chain: Probable G-protein coupled receptor frpr-1 (378 aa).

7 helical membrane passes run 47–67 (LVVI…GNAL), 85–105 (LFAL…LFFL), 120–140 (AVLS…SVFI), 180–200 (VIVC…YNSP), 243–263 (TIVM…AIVI), 277–297 (IITL…PLTV), and 315–337 (SNLM…GSNF).

The protein belongs to the G-protein coupled receptor 1 family.

The protein localises to the cell membrane. This chain is Probable G-protein coupled receptor frpr-1, found in Caenorhabditis elegans.